The primary structure comprises 441 residues: ATP-dependent protease ATPase subunit HslU (441 aa).

ATP-binding positions include isoleucine 18, 60-65 (GVGKTE), aspartate 254, glutamate 319, and arginine 391.

The protein belongs to the ClpX chaperone family. HslU subfamily. As to quaternary structure, a double ring-shaped homohexamer of HslV is capped on each side by a ring-shaped HslU homohexamer. The assembly of the HslU/HslV complex is dependent on binding of ATP.

It localises to the cytoplasm. Its function is as follows. ATPase subunit of a proteasome-like degradation complex; this subunit has chaperone activity. The binding of ATP and its subsequent hydrolysis by HslU are essential for unfolding of protein substrates subsequently hydrolyzed by HslV. HslU recognizes the N-terminal part of its protein substrates and unfolds these before they are guided to HslV for hydrolysis. This chain is ATP-dependent protease ATPase subunit HslU, found in Shewanella frigidimarina (strain NCIMB 400).